Here is a 492-residue protein sequence, read N- to C-terminus: KRAB-A domain-containing protein 2 (492 aa).

Positions 36–117 (LFQEATAFEN…MREKFLMSVT (82 aa)) constitute a KRAB domain. A Phosphoserine modification is found at Ser-115. Thr-117 carries the post-translational modification Phosphothreonine. The Integrase catalytic domain maps to 247–415 (RGLAPKPMTF…SPFEAMFGYK (169 aa)). The stretch at 427 to 457 (RETVATLQTEEELEIAEEQLENSLWIRQEER) forms a coiled coil. Over residues 455–465 (EERAEIGADRS) the composition is skewed to basic and acidic residues. The tract at residues 455–492 (EERAEIGADRSDMDDDMDPTPEASEPSTSQGTSGLLCW) is disordered. A compositionally biased stretch (polar residues) spans 479 to 492 (EPSTSQGTSGLLCW).

In Homo sapiens (Human), this protein is KRAB-A domain-containing protein 2 (KRBA2).